A 347-amino-acid chain; its full sequence is GMP reductase (347 aa).

Position 108–131 (alanine 108–alanine 131) interacts with NADP(+). K(+) is bound by residues glycine 181 and glycine 183. Cysteine 186 serves as the catalytic Thioimidate intermediate. Isoleucine 216 to valine 239 is an NADP(+) binding site.

Belongs to the IMPDH/GMPR family. GuaC type 1 subfamily. In terms of assembly, homotetramer.

The enzyme catalyses IMP + NH4(+) + NADP(+) = GMP + NADPH + 2 H(+). In terms of biological role, catalyzes the irreversible NADPH-dependent deamination of GMP to IMP. It functions in the conversion of nucleobase, nucleoside and nucleotide derivatives of G to A nucleotides, and in maintaining the intracellular balance of A and G nucleotides. The polypeptide is GMP reductase (Klebsiella pneumoniae subsp. pneumoniae (strain ATCC 700721 / MGH 78578)).